A 100-amino-acid polypeptide reads, in one-letter code: ESAT-6-like protein EsxT (100 aa).

This sequence belongs to the WXG100 family. ESAT-6 subfamily. Forms a tight 1:1 complex with EsxU.

It localises to the secreted. The polypeptide is ESAT-6-like protein EsxT (Mycobacterium tuberculosis (strain CDC 1551 / Oshkosh)).